The primary structure comprises 64 residues: DNA-directed RNA polymerase subunit omega (64 aa).

Belongs to the RNA polymerase subunit omega family. The RNAP catalytic core consists of 2 alpha, 1 beta, 1 beta' and 1 omega subunit. When a sigma factor is associated with the core the holoenzyme is formed, which can initiate transcription.

It catalyses the reaction RNA(n) + a ribonucleoside 5'-triphosphate = RNA(n+1) + diphosphate. In terms of biological role, promotes RNA polymerase assembly. Latches the N- and C-terminal regions of the beta' subunit thereby facilitating its interaction with the beta and alpha subunits. This Oceanobacillus iheyensis (strain DSM 14371 / CIP 107618 / JCM 11309 / KCTC 3954 / HTE831) protein is DNA-directed RNA polymerase subunit omega.